The chain runs to 601 residues: Sulfite reductase [NADPH] flavoprotein alpha-component (601 aa).

Residues 65–203 (ITIISASQTG…NYNKWSQDLL (139 aa)) form the Flavodoxin-like domain. FMN is bound by residues 71 to 76 (SQTGNA), 118 to 121 (STQG), and 154 to 163 (LGDTSYNLFC). In terms of domain architecture, FAD-binding FR-type spans 236–450 (KNPAEGIILT…IQTNDNFRLP (215 aa)). Residues Thr-324, Ile-358, 388-391 (RLYS), 406-408 (TVG), and 421-424 (GGAS) each bind FAD. Residues 521-522 (SQ), 527-531 (KIYVQ), and Asp-563 each bind NADP(+). Tyr-601 serves as a coordination point for FAD.

This sequence belongs to the NADPH-dependent sulphite reductase flavoprotein subunit CysJ family. In the N-terminal section; belongs to the flavodoxin family. It in the C-terminal section; belongs to the flavoprotein pyridine nucleotide cytochrome reductase family. As to quaternary structure, alpha(8)-beta(8). The alpha component is a flavoprotein, the beta component is a hemoprotein. FAD is required as a cofactor. The cofactor is FMN.

The enzyme catalyses hydrogen sulfide + 3 NADP(+) + 3 H2O = sulfite + 3 NADPH + 4 H(+). It participates in sulfur metabolism; hydrogen sulfide biosynthesis; hydrogen sulfide from sulfite (NADPH route): step 1/1. Functionally, component of the sulfite reductase complex that catalyzes the 6-electron reduction of sulfite to sulfide. This is one of several activities required for the biosynthesis of L-cysteine from sulfate. The flavoprotein component catalyzes the electron flow from NADPH -&gt; FAD -&gt; FMN to the hemoprotein component. This Buchnera aphidicola subsp. Acyrthosiphon pisum (strain APS) (Acyrthosiphon pisum symbiotic bacterium) protein is Sulfite reductase [NADPH] flavoprotein alpha-component.